A 51-amino-acid polypeptide reads, in one-letter code: Ovomucoid (51 aa).

Positions 3–51 (VDCSGYPKPACTLEYFPLCGSDNQTYANKCTFCNAVVEKNVTLNHLGEC) constitute a Kazal-like domain. 3 cysteine pairs are disulfide-bonded: cysteine 5–cysteine 35, cysteine 13–cysteine 32, and cysteine 21–cysteine 51. A glycan (N-linked (GlcNAc...) asparagine) is linked at asparagine 42.

Its subcellular location is the secreted. This Nothoprocta perdicaria (Chilean tinamou) protein is Ovomucoid.